Reading from the N-terminus, the 600-residue chain is Adenine deaminase (600 aa).

It belongs to the metallo-dependent hydrolases superfamily. Adenine deaminase family. Mn(2+) is required as a cofactor.

It carries out the reaction adenine + H2O + H(+) = hypoxanthine + NH4(+). This Bradyrhizobium sp. (strain BTAi1 / ATCC BAA-1182) protein is Adenine deaminase.